The following is a 502-amino-acid chain: RxLR effector protein BLN06 (502 aa).

The N-terminal stretch at methionine 1–alanine 20 is a signal peptide. N-linked (GlcNAc...) asparagine glycosylation occurs at asparagine 38. Positions leucine 50–arginine 53 match the dEER motif.

The protein belongs to the RxLR effector family.

Its subcellular location is the secreted. It is found in the host cell membrane. Secreted effector that triggers a robust hypersensitive response (HR) in Lactuca serriola LS102. The response to BLN06 was visible as chlorosis but not as strong necrosis. The sequence is that of RxLR effector protein BLN06 from Bremia lactucae (Lettuce downy mildew).